We begin with the raw amino-acid sequence, 219 residues long: Response regulator ArlR (219 aa).

The Response regulatory domain maps to 3–116 (NILIVEDEQN…ELLARIRAVL (114 aa)). Aspartate 52 is modified (4-aspartylphosphate). Positions 122–219 (KDVLDINGII…TVRGVGYVIR (98 aa)) form a DNA-binding region, ompR/PhoB-type.

In terms of processing, phosphorylated by ArlS.

Its subcellular location is the cytoplasm. In terms of biological role, member of the two-component regulatory system ArlS/ArlR. This is Response regulator ArlR (arlR) from Staphylococcus epidermidis (strain ATCC 12228 / FDA PCI 1200).